The chain runs to 20 residues: Ribosome-inactivating protein (20 aa).

The tract at residues 1 to 20 (NVRFDLSGATSSSYKTFIKN) is disordered. The span at 8–20 (GATSSSYKTFIKN) shows a compositional bias: polar residues.

This sequence belongs to the ribosome-inactivating protein family. Type 1 RIP subfamily.

The catalysed reaction is Endohydrolysis of the N-glycosidic bond at one specific adenosine on the 28S rRNA.. This chain is Ribosome-inactivating protein, found in Cucurbita pepo (Vegetable marrow).